Reading from the N-terminus, the 434-residue chain is Probable phosphoglucosamine mutase (434 aa).

S91 (phosphoserine intermediate) is an active-site residue. Mg(2+) is bound by residues S91, D229, D231, and D233. S91 bears the Phosphoserine mark.

The protein belongs to the phosphohexose mutase family. The cofactor is Mg(2+). In terms of processing, activated by phosphorylation.

It carries out the reaction alpha-D-glucosamine 1-phosphate = D-glucosamine 6-phosphate. Functionally, catalyzes the conversion of glucosamine-6-phosphate to glucosamine-1-phosphate. The sequence is that of Probable phosphoglucosamine mutase from Methanosarcina acetivorans (strain ATCC 35395 / DSM 2834 / JCM 12185 / C2A).